A 380-amino-acid polypeptide reads, in one-letter code: Lipid-A-disaccharide synthase (380 aa).

It belongs to the LpxB family.

It catalyses the reaction a lipid X + a UDP-2-N,3-O-bis[(3R)-3-hydroxyacyl]-alpha-D-glucosamine = a lipid A disaccharide + UDP + H(+). Its pathway is bacterial outer membrane biogenesis; LPS lipid A biosynthesis. Its function is as follows. Condensation of UDP-2,3-diacylglucosamine and 2,3-diacylglucosamine-1-phosphate to form lipid A disaccharide, a precursor of lipid A, a phosphorylated glycolipid that anchors the lipopolysaccharide to the outer membrane of the cell. This Francisella philomiragia subsp. philomiragia (strain ATCC 25017 / CCUG 19701 / FSC 153 / O#319-036) protein is Lipid-A-disaccharide synthase.